A 186-amino-acid chain; its full sequence is PRKR-interacting protein 1 (186 aa).

Residues 1–50 are interaction with EIF2AK2; that stretch reads MASSAASSVRPPRPKKEPQALIIPKNAAEEQKLKLERLMKNPDKAVPIPE. Disordered stretches follow at residues 39 to 61 and 119 to 186; these read MKNPDKAVPIPEKMSEWAPRPPP and AAEE…ITGR. The interval 51–143 is required for RNA-binding; it reads KMSEWAPRPP…LKEKKLLAKK (93 aa). Residues 86-153 are a coiled coil; sequence RRREYQRQDY…MKLEQKKQSE (68 aa). Residues 126–138 are required for nuclear localization; the sequence is KRRKKRQKLKEKK. The span at 126-143 shows a compositional bias: basic residues; sequence KRRKKRQKLKEKKLLAKK. The span at 153 to 162 shows a compositional bias: polar residues; sequence EASSETQEQP. Positions 170–179 are enriched in acidic residues; sequence SGTEDEEEDA.

Belongs to the PRKRIP1 family. Component of the pre-catalytic and post-catalytic spliceosome complexes. Interacts with EIF2AK2.

The protein resides in the nucleus. Its subcellular location is the nucleolus. In terms of biological role, required for pre-mRNA splicing as component of the spliceosome. Binds double-stranded RNA. Inhibits EIF2AK2 kinase activity. The protein is PRKR-interacting protein 1 (PRKRIP1) of Bos taurus (Bovine).